Here is an 863-residue protein sequence, read N- to C-terminus: Dynamin-3 (863 aa).

The Dynamin-type G domain maps to 28–294 (LLELPQIAVV…LTNHIRDTLP (267 aa)). The interval 38–45 (GGQSAGKS) is G1 motif. Position 38-46 (38-46 (GGQSAGKSS)) interacts with GTP. A G2 motif region spans residues 64–66 (VTR). The G3 motif stretch occupies residues 136–139 (DLPG). A G4 motif region spans residues 205–208 (TKLD). A GTP-binding site is contributed by 205–211 (TKLDLMD). Position 231 is a phosphotyrosine (Tyr231). The interval 235–238 (VNRS) is G5 motif. 236–239 (NRSQ) is a binding site for GTP. Lys299 is subject to N6-acetyllysine. The PH domain maps to 515-621 (QVIRKGWLTV…WKASLLRAGV (107 aa)). Residue Tyr593 is modified to Phosphotyrosine. N6-acetyllysine is present on Lys594. Disordered regions lie at residues 626-647 (SVGS…SMDP) and 742-863 (ATVS…SLLD). The segment covering 627-642 (VGSNKTENDENGQAEN) has biased composition (polar residues). A GED domain is found at 653–744 (VETIRNLVDS…IIGDINTATV (92 aa)). Residues Ser763 and Ser767 each carry the phosphoserine modification. Composition is skewed to pro residues over residues 791 to 816 (PAIP…PPFP) and 826 to 849 (PQVP…PSPT). Position 847 is a phosphoserine (Ser847).

The protein belongs to the TRAFAC class dynamin-like GTPase superfamily. Dynamin/Fzo/YdjA family.

The protein localises to the cytoplasm. It is found in the cytoskeleton. It carries out the reaction GTP + H2O = GDP + phosphate + H(+). In terms of biological role, microtubule-associated force-producing protein involved in producing microtubule bundles and able to bind and hydrolyze GTP. Most probably involved in vesicular trafficking processes, in particular endocytosis. This is Dynamin-3 (Dnm3) from Mus musculus (Mouse).